The sequence spans 329 residues: Neuropeptides B/W receptor type 1 (329 aa).

Residues 1–43 (MHNLTLFESGGDNVSCGGSSLGCPNGSSLAPLPLPQPLAVAVP) are Extracellular-facing. N-linked (GlcNAc...) asparagine glycosylation is found at Asn-3, Asn-13, and Asn-25. A helical membrane pass occupies residues 44–64 (VVYGVICAVGLAGNSAVLYVL). Residues 65–75 (LRTPRMKTVTN) are Cytoplasmic-facing. A helical membrane pass occupies residues 76–96 (VFILNLAIADELFTLVLPINI). At 97–112 (ADFLLRRWPFGEVMCK) the chain is on the extracellular side. A disulfide bond links Cys-111 and Cys-190. Residues 113-133 (LIVAVDQYNTFSSLYFLAVMS) traverse the membrane as a helical segment. At 134–158 (ADRYLVVLATAESRRVSGRTYGAAR) the chain is on the cytoplasmic side. Residues 159 to 179 (AVSLAVWALVTLVVLPFAVFA) form a helical membrane-spanning segment. The Extracellular segment spans residues 180–209 (RLDEEQGRRQCVLVFPQPEAFWWRASRLYT). Residues 210 to 230 (LVLGFAIPVTTICALYTTLLC) traverse the membrane as a helical segment. Residues 231-250 (RLRAIQLDSHAKALDRAKKR) lie on the Cytoplasmic side of the membrane. A helical membrane pass occupies residues 251-271 (VTLLVAAILAVCLLCWTPYHL). Topologically, residues 272-289 (STIVALTTDLPQTPLVIG) are extracellular. A helical membrane pass occupies residues 290–312 (ISYFITSLSYANSCLNPFLYAFL). Residues 313-329 (DDSFRRSLRQLVSCRSA) lie on the Cytoplasmic side of the membrane.

The protein belongs to the G-protein coupled receptor 1 family.

It localises to the cell membrane. Its function is as follows. Interacts specifically with a number of opioid ligands. Receptor for neuropeptides B and W, which may be involved in neuroendocrine system regulation, food intake and the organization of other signals. The sequence is that of Neuropeptides B/W receptor type 1 (Npbwr1) from Mus musculus (Mouse).